Reading from the N-terminus, the 304-residue chain is Peptidyl-prolyl cis-trans isomerase FKBP35 (304 aa).

A PPIase FKBP-type domain is found at 37 to 126 (GNEVTVHYVG…LFEIELLSFR (90 aa)). TPR repeat units follow at residues 144–177 (AFDIKEEGNEFFKKNEINEAIVKYKEALDFFIHT), 194–227 (ISCNLNLATCYNKNKDYPKAIDHASKVLKIDKNN), and 228–261 (VKALYKLGVANMYFGFLEEAKENLYKAASLNPNN).

Belongs to the FKBP-type PPIase family. In terms of assembly, homodimer. Interacts (via TPR repeats) with HSP90 (probably via MEEVD motif).

It is found in the cytoplasm. It localises to the nucleus. It carries out the reaction [protein]-peptidylproline (omega=180) = [protein]-peptidylproline (omega=0). With respect to regulation, inhibited by FK506 and its derivates, such as ascomycin, and rapamycin. FK506 and rapamycin inhibit peptidylprolyl isomerase activity but not chaperone activity. Inhibited by N-(2-ethyl-phenyl)-2-(3H-imidazao [4, 5-b] pyridin-2-yl-sulfanyl)-acetamide (D44). Not inhibited by cyclosporin A. Inhibition of calcineurin phosphatase activity is enhanced by FK506. Functionally, has peptidylprolyl isomerase (PPIase) and co-chaperone activities. Assists protein folding by catalyzing the peptidyl conversion of cis and trans rotamers of the prolyl amide bond of protein substrates. Inhibits calcineurin phosphatase activity in vitro. Plays an essential role in merozoite egress from host erythrocytes. The sequence is that of Peptidyl-prolyl cis-trans isomerase FKBP35 from Plasmodium falciparum (isolate 3D7).